We begin with the raw amino-acid sequence, 692 residues long: Elongation factor G (692 aa).

In terms of domain architecture, tr-type G spans 8 to 282 (EKTRNIGIMA…AVLDYLPAPT (275 aa)). Residues 17-24 (AHIDAGKT), 81-85 (DTPGH), and 135-138 (NKMD) contribute to the GTP site.

This sequence belongs to the TRAFAC class translation factor GTPase superfamily. Classic translation factor GTPase family. EF-G/EF-2 subfamily.

It is found in the cytoplasm. Functionally, catalyzes the GTP-dependent ribosomal translocation step during translation elongation. During this step, the ribosome changes from the pre-translocational (PRE) to the post-translocational (POST) state as the newly formed A-site-bound peptidyl-tRNA and P-site-bound deacylated tRNA move to the P and E sites, respectively. Catalyzes the coordinated movement of the two tRNA molecules, the mRNA and conformational changes in the ribosome. The protein is Elongation factor G of Bacillus velezensis (strain DSM 23117 / BGSC 10A6 / LMG 26770 / FZB42) (Bacillus amyloliquefaciens subsp. plantarum).